Here is a 427-residue protein sequence, read N- to C-terminus: Adenylosuccinate synthetase (427 aa).

Residues 12–18 (GDEGKGK) and 40–42 (GHT) contribute to the GTP site. The Proton acceptor role is filled by Asp13. Residues Asp13 and Gly40 each contribute to the Mg(2+) site. Residues 13-16 (DEGK), 38-41 (NAGH), Thr128, Arg142, Gln223, Thr238, and Arg302 contribute to the IMP site. His41 serves as the catalytic Proton donor. 298–304 (TTTGRPR) serves as a coordination point for substrate. Residues Arg304, 330–332 (SID), and 412–414 (SVG) contribute to the GTP site.

This sequence belongs to the adenylosuccinate synthetase family. In terms of assembly, homodimer. Mg(2+) is required as a cofactor.

It is found in the cytoplasm. It carries out the reaction IMP + L-aspartate + GTP = N(6)-(1,2-dicarboxyethyl)-AMP + GDP + phosphate + 2 H(+). Its pathway is purine metabolism; AMP biosynthesis via de novo pathway; AMP from IMP: step 1/2. Its function is as follows. Plays an important role in the de novo pathway of purine nucleotide biosynthesis. Catalyzes the first committed step in the biosynthesis of AMP from IMP. In Staphylococcus epidermidis (strain ATCC 35984 / DSM 28319 / BCRC 17069 / CCUG 31568 / BM 3577 / RP62A), this protein is Adenylosuccinate synthetase.